Consider the following 501-residue polypeptide: Solute carrier family 2, facilitated glucose transporter member 5 (501 aa).

Met1 is modified (N-acetylmethionine). Over Met1–Val18 the chain is Cytoplasmic. Residues Leu19 to Ile39 form a helical membrane-spanning segment. Tyr32 lines the D-fructose pocket. The Extracellular segment spans residues Asn40–Thr68. An N-linked (GlcNAc...) asparagine glycan is attached at Asn51. Residues Leu69–Pro91 form a helical membrane-spanning segment. Over Leu92–Arg98 the chain is Cytoplasmic. A helical transmembrane segment spans residues Lys99–Ser119. Residues Asp120–Glu126 are Extracellular-facing. The chain crosses the membrane as a helical span at residues Met127–Tyr149. At Leu150 to Ala161 the chain is on the cytoplasmic side. A helical membrane pass occupies residues Leu162–Leu182. Residue Gln167 coordinates D-fructose. Topologically, residues Arg183–Trp192 are extracellular. A helical transmembrane segment spans residues Pro193–Phe213. Residues Pro214–Gln277 lie on the Cytoplasmic side of the membrane. Residues Val278–Tyr298 form a helical membrane-spanning segment. D-fructose-binding positions include Gln288 and Ile296–Tyr298. Residues Tyr299 to Asp313 are Extracellular-facing. The chain crosses the membrane as a helical span at residues Val314–Phe334. Topologically, residues Val335–Arg342 are cytoplasmic. The chain crosses the membrane as a helical span at residues Phe343–Leu363. Residues Ala364–Trp371 lie on the Extracellular side of the membrane. A helical membrane pass occupies residues Met372 to Ile394. His387 contributes to the D-fructose binding site. Over Pro395–Tyr412 the chain is Cytoplasmic. The chain crosses the membrane as a helical span at residues Met413–Ile433. His419–Trp420 is a binding site for D-fructose. Topologically, residues Gln434 to Ala439 are extracellular. The helical transmembrane segment at Tyr440–Ile460 threads the bilayer. Topologically, residues Pro461–Gln501 are cytoplasmic.

This sequence belongs to the major facilitator superfamily. Sugar transporter (TC 2.A.1.1) family. Glucose transporter subfamily.

Its subcellular location is the apical cell membrane. It localises to the cell membrane. The protein resides in the sarcolemma. The enzyme catalyses D-fructose(out) = D-fructose(in). Functionally, functions as a fructose transporter that has only low activity with other monosaccharides. Can mediate the uptake of deoxyglucose, but with low efficiency. Essential for fructose uptake in the small intestine. Plays a role in the regulation of salt uptake and blood pressure in response to dietary fructose. Required for the development of high blood pressure in response to high dietary fructose intake. The protein is Solute carrier family 2, facilitated glucose transporter member 5 of Ovis aries (Sheep).